The primary structure comprises 74 residues: Small heat shock protein hspG10 (74 aa).

The sHSP domain occupies 31–74 (KTIIDILPSMDVTMTNDKLIIETELAGISKDHIEIDIKDSILTI).

Belongs to the small heat shock protein (HSP20) family.

This is Small heat shock protein hspG10 (hspG10) from Dictyostelium discoideum (Social amoeba).